The primary structure comprises 339 residues: Probable thylakoid lumen protein sll0997 (339 aa).

Positions methionine 1–alanine 26 are cleaved as a signal peptide.

The protein localises to the cellular thylakoid lumen. This Synechocystis sp. (strain ATCC 27184 / PCC 6803 / Kazusa) protein is Probable thylakoid lumen protein sll0997.